Reading from the N-terminus, the 131-residue chain is Global transcriptional regulator Spx (131 aa).

C10 and C13 are joined by a disulfide.

Belongs to the ArsC family. Spx subfamily. Interacts with the C-terminal domain of the alpha subunit of the RNAP.

Its subcellular location is the cytoplasm. In terms of biological role, global transcriptional regulator that plays a key role in stress response and exerts either positive or negative regulation of genes. Acts by interacting with the C-terminal domain of the alpha subunit of the RNA polymerase (RNAP). This interaction can enhance binding of RNAP to the promoter region of target genes and stimulate their transcription, or block interaction of RNAP with activator. The sequence is that of Global transcriptional regulator Spx from Staphylococcus haemolyticus (strain JCSC1435).